Reading from the N-terminus, the 448-residue chain is Antizyme inhibitor 1 (448 aa).

It belongs to the Orn/Lys/Arg decarboxylase class-II family. ODC antizyme inhibitor subfamily. As to quaternary structure, monomer. Interacts with OAZ1 and OAZ3; this interaction disrupts the interaction between the antizyme and ODC1. Ubiquitinated, leading to its proteasomal degradation; a process that is reduced in presence of antizyme OAZ1.

Its subcellular location is the nucleus. Its function is as follows. Antizyme inhibitor (AZI) protein that positively regulates ornithine decarboxylase (ODC) activity and polyamine uptake. AZI is an enzymatically inactive ODC homolog that counteracts the negative effect of ODC antizymes (AZs) OAZ1, OAZ2 and OAZ3 on ODC activity by competing with ODC for antizyme-binding. Inhibits antizyme-dependent ODC degradation and releases ODC monomers from their inactive complex with antizymes, leading to formation of the catalytically active ODC homodimer and restoring polyamine production. The polypeptide is Antizyme inhibitor 1 (AZIN1) (Pongo abelii (Sumatran orangutan)).